The chain runs to 489 residues: F-box/LRR-repeat protein 7 (489 aa).

Over residues 1 to 31 (MGANNGKQSGSEGKGSSSISSDLSSSTDQTS) the composition is skewed to low complexity. A disordered region spans residues 1 to 76 (MGANNGKQSG…AVLNGSSTSS (76 aa)). A compositionally biased stretch (polar residues) spans 32–55 (TKAPKNAATSEDSDLSMRTVSTPS). Residues 64–76 (SSSAVLNGSSTSS) are compositionally biased toward low complexity. The F-box domain occupies 109 to 155 (GAPVDILPDHAFLQIFTHLPTNQLCRCARVCRRWYNLAWDPRLWRTI). LRR repeat units lie at residues 168 to 193 (LRVL…MVSG), 194 to 219 (CRRL…EVAG), 220 to 245 (CYNV…DVSG), 251 to 279 (CISL…DMTD), 280 to 305 (CFAL…YLRR), 306 to 331 (CVRL…SVSD), 332 to 357 (CRFI…SIAH), 358 to 383 (CSRI…NARG), 384 to 409 (CEGL…DIGK), 410 to 435 (CPLV…SLKS), and 436 to 461 (CESI…NVQD).

This sequence belongs to the FBXL7 family. Part of the SCF (SKP1-CUL1-F-box) E3 ubiquitin-protein ligase complex SCF(FBXL7).

The protein localises to the cytoplasm. It localises to the cytoskeleton. The protein resides in the microtubule organizing center. It is found in the centrosome. Its pathway is protein modification; protein ubiquitination. Substrate recognition component of a SCF (SKP1-CUL1-F-box protein) E3 ubiquitin-protein ligase complex which mediates the ubiquitination and subsequent proteasomal degradation of target proteins. The chain is F-box/LRR-repeat protein 7 (fbxl7) from Danio rerio (Zebrafish).